Here is a 617-residue protein sequence, read N- to C-terminus: MMVPLAKLASPAYQCFHALKIKKNYLPLCATRWSSTCKVPRITTHYTIYPRDQDKRWEGVNMERFAEEADVVIVGAGPAGLSAATRLKQLAAQHEKDLRVCLVEKAAHIGAHTLSGACLDPRAFEELFPDWKEKGAPLNTPVTEDRFGILTEKYRIPVPILPGLPMNNHGNYVVRLGHLVSWMGEQAEALGVEVYPGYAAAEILFHEDGSVKGIATNDVGIQKDGAPKTTFERGLELHAKVTIFAEGCHGHLAKQLYKKFDLRANCEPQTYGIGLKELWVIDEKKWKPGRVDHTVGWPLDRHTYGGSFLYHLNEGEPLLALGFVVGLDYQNPYLSPFREFQRWKHHPSIKPTLEGGKRIAYGARALNEGGFQSIPKLTFPGGLLIGCSPGFMNVPKIKGTHTAMKSGTLAAESIFNQLTSENLQSKTIGLHVTEYEDNLKNSWVWKELYSVRNIRPSCHGILGVYGGMIYTGIFYWIFRGMEPWTLKHKGSDSDQLKPAKDCTPIEYPKPDGQISFDLLSSVALSGTNHEHDQPAHLTLKDDSVPVNRNLSIYDGPEQRFCPAGVYEFVPLEQGDGFRLQINAQNCVHCKTCDIKDPSQNINWVVPEGGGGPAYNGM.

The N-terminal 33 residues, 1–33, are a transit peptide targeting the mitochondrion; that stretch reads MMVPLAKLASPAYQCFHALKIKKNYLPLCATRW. 75-80 contributes to the FAD binding site; that stretch reads GAGPAG. The residue at position 96 (K96) is an N6-acetyllysine. The stretch at 109 to 130 is an intramembrane region; the sequence is IGAHTLSGACLDPRAFEELFPD. Residues K132 and K223 each carry the N6-acetyllysine modification. A ubiquinone is bound by residues G305 and G306. Residue K357 is modified to N6-acetyllysine. Residues 428–447 lie within the membrane without spanning it; that stretch reads IGLHVTEYEDNLKNSWVWKE. At S551 the chain carries Phosphoserine. [4Fe-4S] cluster contacts are provided by C561, C586, C589, and C592. The 4Fe-4S ferredoxin-type domain occupies 577-606; sequence FRLQINAQNCVHCKTCDIKDPSQNINWVVP.

As to quaternary structure, monomer. Requires [4Fe-4S] cluster as cofactor. FAD is required as a cofactor.

Its subcellular location is the mitochondrion inner membrane. The catalysed reaction is a ubiquinone + reduced [electron-transfer flavoprotein] = a ubiquinol + oxidized [electron-transfer flavoprotein] + H(+). Functionally, accepts electrons from ETF and reduces ubiquinone. This Sus scrofa (Pig) protein is Electron transfer flavoprotein-ubiquinone oxidoreductase, mitochondrial (ETFDH).